The primary structure comprises 367 residues: Phosphoribosylaminoimidazole-succinocarboxamide synthase (367 aa).

Belongs to the SAICAR synthetase family.

It carries out the reaction 5-amino-1-(5-phospho-D-ribosyl)imidazole-4-carboxylate + L-aspartate + ATP = (2S)-2-[5-amino-1-(5-phospho-beta-D-ribosyl)imidazole-4-carboxamido]succinate + ADP + phosphate + 2 H(+). The protein operates within purine metabolism; IMP biosynthesis via de novo pathway; 5-amino-1-(5-phospho-D-ribosyl)imidazole-4-carboxamide from 5-amino-1-(5-phospho-D-ribosyl)imidazole-4-carboxylate: step 1/2. This is Phosphoribosylaminoimidazole-succinocarboxamide synthase from Vibrio parahaemolyticus serotype O3:K6 (strain RIMD 2210633).